The following is a 188-amino-acid chain: Large ribosomal subunit protein eL18A (188 aa).

The disordered stretch occupies residues 153-188 (GKAPSTPHSRTKPYVLSKGRKFERARGRRASRGYKN). Positions 178–188 (RGRRASRGYKN) are enriched in basic residues.

This sequence belongs to the eukaryotic ribosomal protein eL18 family. As to quaternary structure, component of the large ribosomal subunit.

The protein localises to the cytoplasm. Its function is as follows. Component of the large ribosomal subunit. The ribosome is a large ribonucleoprotein complex responsible for the synthesis of proteins in the cell. The sequence is that of Large ribosomal subunit protein eL18A (rpl18-a) from Xenopus laevis (African clawed frog).